The sequence spans 256 residues: MVATKSVLSAVALAGVAAAETIDVMVGQGGLKFVPDNIKAKAGDEVVFHFVMGHHDVTLGRYDSPCMPIQGESIWSGVVDTVEKGKGVTFTVPIHDDKTKWIYCSVAKHCQNGMSLVINEPSSGDNQADYKDRAKIVPQSGSPTQVKGGTLGGSGGSGGSSSSSASSSGSSSGTTSAPTPTGGHSSSHPSSTSGSDSSNTQSTPDATLIPSGSIPSATGSGSHSSTPTASPGAAAGLKGSAVLAGVVALGAWIGLL.

A signal peptide spans 1 to 19 (MVATKSVLSAVALAGVAAA). The disordered stretch occupies residues 135 to 235 (KIVPQSGSPT…TPTASPGAAA (101 aa)). Gly residues predominate over residues 149–159 (GTLGGSGGSGG). 2 stretches are compositionally biased toward low complexity: residues 160-204 (SSSS…QSTP) and 215-235 (PSAT…GAAA). The GPI-anchor amidated alanine moiety is linked to residue A233. Positions 234–256 (AAGLKGSAVLAGVVALGAWIGLL) are cleaved as a propeptide — removed in mature form.

The protein resides in the cell membrane. Its subcellular location is the secreted. The chain is Extracellular serine-rich protein ARB_03024 from Arthroderma benhamiae (strain ATCC MYA-4681 / CBS 112371) (Trichophyton mentagrophytes).